A 194-amino-acid chain; its full sequence is Mu-like prophage FluMu protein gp37 (194 aa).

It to phage Mu protein gp37.

This chain is Mu-like prophage FluMu protein gp37, found in Haemophilus influenzae (strain ATCC 51907 / DSM 11121 / KW20 / Rd).